The primary structure comprises 104 residues: Nucleoid-associated protein PEPE_1483 (104 aa).

The disordered stretch occupies residues 1 to 35 (MRGGMGNMQSMMRQMQKMQKKVTEEQEKLNQTEFT). The segment covering 8–17 (MQSMMRQMQK) has biased composition (low complexity). The span at 21 to 30 (KVTEEQEKLN) shows a compositional bias: basic and acidic residues.

Belongs to the YbaB/EbfC family. Homodimer.

It localises to the cytoplasm. It is found in the nucleoid. Its function is as follows. Binds to DNA and alters its conformation. May be involved in regulation of gene expression, nucleoid organization and DNA protection. The chain is Nucleoid-associated protein PEPE_1483 from Pediococcus pentosaceus (strain ATCC 25745 / CCUG 21536 / LMG 10740 / 183-1w).